The primary structure comprises 212 residues: Golgi SNAP receptor complex member 2 (212 aa).

The residue at position 1 (Met1) is an N-acetylmethionine. The Cytoplasmic segment spans residues Met1 to Lys190. A coiled-coil region spans residues Asn61–Arg107. Positions Ile118–Met120 match the IxM motif; signal for cargo packaging into COPII-coated vesicles motif. Residues Tyr191–Leu211 traverse the membrane as a helical; Anchor for type IV membrane protein segment. Position 212 (Thr212) is a topological domain, vesicular.

Belongs to the GOSR2 family. As to quaternary structure, part of a unique SNARE complex composed of the Golgi SNAREs GOSR1, STX5 and YKT6. Interacts with BET1.

Its subcellular location is the golgi apparatus. The protein resides in the cis-Golgi network membrane. It localises to the golgi apparatus membrane. The protein localises to the endoplasmic reticulum membrane. Functionally, involved in transport of proteins from the cis/medial-Golgi to the trans-Golgi network. In Rattus norvegicus (Rat), this protein is Golgi SNAP receptor complex member 2 (Gosr2).